A 58-amino-acid chain; its full sequence is Proteinase inhibitor PSKP-2 (58 aa).

The 58-residue stretch at 1–58 folds into the Kazal-like domain; it reads VIEPDCKKYEGKKCPPDIALVCGTNGREYYNECALCVFIRDSTLKADKAIKIKKWGKC. 3 disulfides stabilise this stretch: C6-C36, C14-C33, and C22-C58.

Skin.

The protein resides in the secreted. May have a role in mucosal defense against microbes by interacting directly with their membranes. The chain is Proteinase inhibitor PSKP-2 from Phyllomedusa sauvagei (Sauvage's leaf frog).